The primary structure comprises 360 residues: Phospho-N-acetylmuramoyl-pentapeptide-transferase (360 aa).

The next 10 helical transmembrane spans lie at 27–47, 72–92, 94–114, 132–152, 168–188, 199–219, 236–256, 263–283, 288–308, and 338–358; these read IVSL…LIGW, PTMG…MWAY, SNPY…VGFV, WKYF…YCIG, IMPQ…VGTS, GLAI…AWAT, AGEL…FLWF, VFMG…IAVL, FLLV…ILQV, and VIVR…ATLK.

It belongs to the glycosyltransferase 4 family. MraY subfamily. The cofactor is Mg(2+).

The protein localises to the cell inner membrane. It catalyses the reaction UDP-N-acetyl-alpha-D-muramoyl-L-alanyl-gamma-D-glutamyl-meso-2,6-diaminopimeloyl-D-alanyl-D-alanine + di-trans,octa-cis-undecaprenyl phosphate = di-trans,octa-cis-undecaprenyl diphospho-N-acetyl-alpha-D-muramoyl-L-alanyl-D-glutamyl-meso-2,6-diaminopimeloyl-D-alanyl-D-alanine + UMP. Its pathway is cell wall biogenesis; peptidoglycan biosynthesis. Functionally, catalyzes the initial step of the lipid cycle reactions in the biosynthesis of the cell wall peptidoglycan: transfers peptidoglycan precursor phospho-MurNAc-pentapeptide from UDP-MurNAc-pentapeptide onto the lipid carrier undecaprenyl phosphate, yielding undecaprenyl-pyrophosphoryl-MurNAc-pentapeptide, known as lipid I. This Edwardsiella ictaluri (strain 93-146) protein is Phospho-N-acetylmuramoyl-pentapeptide-transferase.